A 228-amino-acid polypeptide reads, in one-letter code: 2-C-methyl-D-erythritol 4-phosphate cytidylyltransferase (228 aa).

It belongs to the IspD/TarI cytidylyltransferase family. IspD subfamily.

The enzyme catalyses 2-C-methyl-D-erythritol 4-phosphate + CTP + H(+) = 4-CDP-2-C-methyl-D-erythritol + diphosphate. The protein operates within isoprenoid biosynthesis; isopentenyl diphosphate biosynthesis via DXP pathway; isopentenyl diphosphate from 1-deoxy-D-xylulose 5-phosphate: step 2/6. Its function is as follows. Catalyzes the formation of 4-diphosphocytidyl-2-C-methyl-D-erythritol from CTP and 2-C-methyl-D-erythritol 4-phosphate (MEP). The sequence is that of 2-C-methyl-D-erythritol 4-phosphate cytidylyltransferase from Trichormus variabilis (strain ATCC 29413 / PCC 7937) (Anabaena variabilis).